We begin with the raw amino-acid sequence, 871 residues long: Probable LRR receptor-like serine/threonine-protein kinase At1g51810 (871 aa).

An N-terminal signal peptide occupies residues 1–20 (MERHCLFFVIFSLILHLVQA). The Extracellular segment spans residues 21-512 (QDPIGFINLD…GRQIKSMTIP (492 aa)). N93, N179, N229, N283, N295, N396, N410, N439, N458, N463, and N489 each carry an N-linked (GlcNAc...) asparagine glycan. LRR repeat units follow at residues 405-426 (IITSLNLSSSGLTGIIVLTIQN), 429-449 (NLQELDLSNNNLSGGVPEFLA), and 453-474 (SLLVINLSGNNLSGVVPQKLIE). Residues 513 to 533 (IVASIGSVVAFTVALMIFCVV) form a helical membrane-spanning segment. The Cytoplasmic segment spans residues 534 to 871 (RKNNPSNDEA…FGTEVAPMAR (338 aa)). T568 carries the post-translational modification Phosphothreonine. Residues 577–850 (NNFQKILGKG…QVVFELKECL (274 aa)) form the Protein kinase domain. ATP-binding positions include 583–591 (LGKGGFGIV) and K605. Position 650 is a phosphotyrosine (Y650). Catalysis depends on D702, which acts as the Proton acceptor. S736 bears the Phosphoserine mark. 2 positions are modified to phosphothreonine: T737 and T742. Phosphotyrosine is present on Y750.

Belongs to the protein kinase superfamily. Ser/Thr protein kinase family.

It is found in the membrane. It catalyses the reaction L-seryl-[protein] + ATP = O-phospho-L-seryl-[protein] + ADP + H(+). It carries out the reaction L-threonyl-[protein] + ATP = O-phospho-L-threonyl-[protein] + ADP + H(+). In Arabidopsis thaliana (Mouse-ear cress), this protein is Probable LRR receptor-like serine/threonine-protein kinase At1g51810.